The chain runs to 285 residues: Elongation factor Ts (285 aa).

Residues threonine 75–valine 78 form an involved in Mg(2+) ion dislocation from EF-Tu region.

This sequence belongs to the EF-Ts family.

It is found in the cytoplasm. In terms of biological role, associates with the EF-Tu.GDP complex and induces the exchange of GDP to GTP. It remains bound to the aminoacyl-tRNA.EF-Tu.GTP complex up to the GTP hydrolysis stage on the ribosome. The polypeptide is Elongation factor Ts (Alcanivorax borkumensis (strain ATCC 700651 / DSM 11573 / NCIMB 13689 / SK2)).